Here is a 1282-residue protein sequence, read N- to C-terminus: Indigoidine synthase (1282 aa).

Positions 24–379 are adenylation; the sequence is AQRVAEHPEA…GGIQLARGYL (356 aa). The Carrier domain maps to 937–1012; that stretch reads APRTETEKEI…KLARRLEREV (76 aa). S972 carries the O-(pantetheine 4'-phosphoryl)serine modification. The segment at 1030–1138 is thioesterase; the sequence is RPVICWPGLG…APGSPKVRAE (109 aa).

Belongs to the ATP-dependent AMP-binding enzyme family. Pantetheine 4'-phosphate is required as a cofactor.

It catalyses the reaction 2 FMN + 2 L-glutamine + 2 ATP + O2 = indigoidine + 2 FMNH2 + 2 AMP + 2 diphosphate + 2 H2O. The enzyme catalyses FMN + L-glutamine + ATP = 3-amino-1,5-dihydropyridine-2,6-dione + FMNH2 + AMP + diphosphate. It carries out the reaction 2 3-amino-1,5-dihydropyridine-2,6-dione + O2 = indigoidine + 2 H2O. The protein operates within pigment biosynthesis. Nonribosomal peptide synthetase involved in the biosynthesis of the blue pigment indigoidine. Catalyzes the synthesis of the blue pigment using L-Gln as a substrate. Two glutamine molecules are cyclized and oxidized to form indigoidine. This chain is Indigoidine synthase, found in Streptomyces lavendulae.